The sequence spans 341 residues: MMSMNSKQAFSMHPILHEPKYPHLHTSSEAIRRACLPAPQIQGNIFAGFDETLLRGAEALAAVDIVSQKTHPFKPDATYHTMSSVSCTPTSSSVHLHHPSVLTTHHPHHHHHQPAQGLEGELLDHLNSALPLGGVPGPDVGSTPSHPHSHMSAINHMAHHSQPMNMSHPHGLASHAVISGPETETDPRELESFAERFKQRRIKLGVTQADVGSALANLKIPGVGCLSQSTICRFESLTLSHNNMVALKPILEAWLEEAERAQREKMTKPEIYTGGDKKRKRTSIAAPEKRSLEAYFAVQPRPSSEKIAAIAEKLDLKKNVVRVWFCNQRQKQKRMKFSATY.

Positions 55–65 (RGAEALAAVDI) match the POU-IV box motif. In terms of domain architecture, POU-specific spans 182–259 (ETETDPRELE…ILEAWLEEAE (78 aa)). Residues 277–336 (KKRKRTSIAAPEKRSLEAYFAVQPRPSSEKIAAIAEKLDLKKNVVRVWFCNQRQKQKRMK) constitute a DNA-binding region (homeobox).

It belongs to the POU transcription factor family. Class-4 subfamily.

The protein localises to the nucleus. Functionally, may play a role in specifying terminally differentiated neuronal phenotypes. This Gallus gallus (Chicken) protein is Brain-specific homeobox/POU domain protein 3 (BRN3).